The following is a 600-amino-acid chain: Kynurenine 3-monooxygenase (600 aa).

Residues 217–242 form a disordered region; it reads GDSCADEPSGCGGRKQATTKSQGSEY.

It belongs to the aromatic-ring hydroxylase family. KMO subfamily. FAD is required as a cofactor.

The protein localises to the mitochondrion outer membrane. The enzyme catalyses L-kynurenine + NADPH + O2 + H(+) = 3-hydroxy-L-kynurenine + NADP(+) + H2O. It participates in cofactor biosynthesis; NAD(+) biosynthesis; quinolinate from L-kynurenine: step 1/3. In terms of biological role, catalyzes the hydroxylation of L-kynurenine (L-Kyn) to form 3-hydroxy-L-kynurenine (L-3OHKyn). Required for synthesis of quinolinic acid. In Mycosarcoma maydis (Corn smut fungus), this protein is Kynurenine 3-monooxygenase.